Reading from the N-terminus, the 214-residue chain is Adenylate kinase (214 aa).

10–15 is an ATP binding site; that stretch reads GAGKGT. The tract at residues 30–59 is NMP; the sequence is STGDMLRAAVKAGTELGKQAKEIMDAGKLV. AMP is bound by residues Thr-31, Arg-36, 57–59, 85–88, and Gln-92; these read KLV and GFPR. Positions 122–159 are LID; sequence GRRVHAASGRVYHVKFNPPKVEDKDDVTGEDLSVRKDD. Residues Arg-123 and 132–133 each bind ATP; that span reads VY. AMP-binding residues include Arg-156 and Arg-167. Residue Arg-200 participates in ATP binding.

Belongs to the adenylate kinase family. As to quaternary structure, monomer.

It is found in the cytoplasm. It carries out the reaction AMP + ATP = 2 ADP. It participates in purine metabolism; AMP biosynthesis via salvage pathway; AMP from ADP: step 1/1. Its function is as follows. Catalyzes the reversible transfer of the terminal phosphate group between ATP and AMP. Plays an important role in cellular energy homeostasis and in adenine nucleotide metabolism. The chain is Adenylate kinase from Pectobacterium atrosepticum (strain SCRI 1043 / ATCC BAA-672) (Erwinia carotovora subsp. atroseptica).